The following is a 377-amino-acid chain: D-alanine--D-alanine ligase (377 aa).

The 210-residue stretch at 137 to 346 (KELMTVNGIR…RSQQAEKLIQ (210 aa)) folds into the ATP-grasp domain. 167 to 222 (SKQLGEVVFVKAANQGSSVGVSRVTNAEEYENALRDSFQYDEKLLVEKAVESPTEL) is an ATP binding site. Mg(2+)-binding residues include D300, E313, and N315.

The protein belongs to the D-alanine--D-alanine ligase family. Mg(2+) is required as a cofactor. Mn(2+) serves as cofactor.

The protein localises to the cytoplasm. It carries out the reaction 2 D-alanine + ATP = D-alanyl-D-alanine + ADP + phosphate + H(+). Its pathway is cell wall biogenesis; peptidoglycan biosynthesis. Its function is as follows. Cell wall formation. The polypeptide is D-alanine--D-alanine ligase (Oenococcus oeni (strain ATCC BAA-331 / PSU-1)).